A 399-amino-acid chain; its full sequence is MTVKVCVCGGGNGAHTLSGLAASRDGVEVRVLTLFADEAERWTKALGADELTVIVNEKDGTQTEVKSRPKVITKDPEIAISGADVVILTVPAFAHEGYFQAMAPYVQDSALIVGLPSQAGFEFQCRDILGDKAAAVSMMSFETLPWACRIKEFGRKVEVLGTKSVLAASLIKGTAKTVDPLSTLQMLHGAEPVFRLAKHFLEMLIMSYSFVHPAILFGRWGSWDGKPVPEAPLFYQGIDQATADMLTACSNECKDVANAIMAACPGNDLSDVKDIYQWYLEYYHEDIQDDHDLYHAITTNKSYKGLVHPVKAVDGGVAPDFGNRYLTEDIPMGMIVFKGVAIAAGVAIPSNDKLIMWAQEKIGKEYLVDGALTGKDVATTRCPQRYGFNTLDAILTGKK.

NADH is bound by residues 10–13 and 35–38; these read GGNG and FADE. Positions 118 and 143 each coordinate pyruvate. Gln-118 is a substrate binding site. Cys-148 is a binding site for NAD(+). Met-206 contributes to the L-arginine binding site. His-212 contributes to the pyruvate binding site. The active site involves His-212. Arg-324 is a binding site for NAD(+).

It belongs to the lysopine/nopaline/octopine/opine/vitopine dehydrogenases family.

The catalysed reaction is D-octopine + NAD(+) + H2O = L-arginine + pyruvate + NADH + H(+). Its activity is regulated as follows. Agmatine acts as a competitive inhibitor of the condensation reaction where the L-arginine and agmatine substrates compete for the same site. Catalyzes the reverse reaction of octopine dehydrogenation. Acts on L-arginine in preference to other substrates such as canavanine, cysteine, L-alanine, ornithine or norvaline, owing to the presence of the positively charged guanidium group. This chain is Octopine dehydrogenase, found in Pecten maximus (King scallop).